The primary structure comprises 607 residues: MELVRRLMPLTLLILSCLAELTMAEAEGNASCTVSLGGANMAETHKAMILQLNPSENCTWTIERPENKSIRIIFSYVQLDPDGSCESENIKVFDGTSSNGPLLGQVCSKNDYVPVFESSSSTLTFQIVTDSARIQRTVFVFYYFFSPNISIPNCGGYLDTLEGSFTSPNYPKPHPELAYCVWHIQVEKDYKIKLNFKEIFLEIDKQCKFDFLAIYDGPSTNSGLIGQVCGRVTPTFESSSNSLTVVLSTDYANSYRGFSASYTSIYAENINTTSLTCSSDRMRVIISKSYLEAFNSNGNNLQLKDPTCRPKLSNVVEFSVPLNGCGTIRKVEDQSITYTNIITFSASSTSEVITRQKQLQIIVKCEMGHNSTVEIIYITEDDVIQSQNALGKYNTSMALFESNSFEKTILESPYYVDLNQTLFVQVSLHTSDPNLVVFLDTCRASPTSDFASPTYDLIKSGCSRDETCKVYPLFGHYGRFQFNAFKFLRSMSSVYLQCKVLICDSSDHQSRCNQGCVSRSKRDISSYKWKTDSIIGPIRLKRDRSASGNSGFQHETHAEETPNQPFNSVHLFSFMVLALNVVTVATITVRHFVNQRADYKYQKLQNY.

A signal peptide spans 1 to 24; sequence MELVRRLMPLTLLILSCLAELTMA. The cysteines at positions 17 and 58 are disulfide-linked. CUB domains follow at residues 25 to 146 and 154 to 265; these read EAEG…YFFS and CGGY…YTSI. The Lumenal portion of the chain corresponds to 25-568; that stretch reads EAEGNASCTV…EETPNQPFNS (544 aa). Residues asparagine 29, asparagine 57, and asparagine 67 are each glycosylated (N-linked (GlcNAc...) asparagine). Intrachain disulfides connect cysteine 85/cysteine 107, cysteine 154/cysteine 180, and cysteine 207/cysteine 229. One can recognise a ZP domain in the interval 276–519; the sequence is TCSSDRMRVI…SRCNQGCVSR (244 aa). N-linked (GlcNAc...) asparagine glycosylation is found at asparagine 394 and asparagine 419. A disulfide bond links cysteine 442 and cysteine 498. Residues 569-589 form a helical membrane-spanning segment; the sequence is VHLFSFMVLALNVVTVATITV. Residues 590-607 lie on the Cytoplasmic side of the membrane; that stretch reads RHFVNQRADYKYQKLQNY.

In terms of tissue distribution, detected in pancreas and epithelium of ovary. Expressed at higher levels in ovarian tumors than in normal tissue.

The protein resides in the zymogen granule membrane. Localized to zymogen granules, where it functions in trypsinogen activation. May indirectly regulate cell motility, cell-cell and cell/extracellular matrix interactions. In Homo sapiens (Human), this protein is CUB and zona pellucida-like domain-containing protein 1.